A 279-amino-acid polypeptide reads, in one-letter code: Phosphatidylglycerol--prolipoprotein diacylglyceryl transferase (279 aa).

Transmembrane regions (helical) follow at residues 18–38 (LSVR…YFVA), 55–75 (IIFY…VIFQ), and 89–109 (IWHG…AGVI). A 1,2-diacyl-sn-glycero-3-phospho-(1'-sn-glycerol) is bound at residue Arg137. A run of 2 helical transmembrane segments spans residues 203-223 (LGET…FIEG) and 235-255 (IRVA…LIVY).

The protein belongs to the Lgt family.

It localises to the cell membrane. The enzyme catalyses L-cysteinyl-[prolipoprotein] + a 1,2-diacyl-sn-glycero-3-phospho-(1'-sn-glycerol) = an S-1,2-diacyl-sn-glyceryl-L-cysteinyl-[prolipoprotein] + sn-glycerol 1-phosphate + H(+). The protein operates within protein modification; lipoprotein biosynthesis (diacylglyceryl transfer). Functionally, catalyzes the transfer of the diacylglyceryl group from phosphatidylglycerol to the sulfhydryl group of the N-terminal cysteine of a prolipoprotein, the first step in the formation of mature lipoproteins. The polypeptide is Phosphatidylglycerol--prolipoprotein diacylglyceryl transferase (Staphylococcus aureus (strain Mu3 / ATCC 700698)).